The chain runs to 188 residues: Elongation factor P (188 aa).

It belongs to the elongation factor P family.

It localises to the cytoplasm. It participates in protein biosynthesis; polypeptide chain elongation. Involved in peptide bond synthesis. Stimulates efficient translation and peptide-bond synthesis on native or reconstituted 70S ribosomes in vitro. Probably functions indirectly by altering the affinity of the ribosome for aminoacyl-tRNA, thus increasing their reactivity as acceptors for peptidyl transferase. This is Elongation factor P from Rickettsia rickettsii (strain Iowa).